The chain runs to 169 residues: MLTAATEVLAAADGPGSAESAWAWRDAPIATLVQRIQQLQNERAQAFRRLDQAHRQYLLSGQHYDFPSYRSVVHEVTQAFAAASREVLAVEAELAGPRAQPVLARHVRSLQELEQTRLATVALLQVMGTPGVSEQDPEKLHQLKIKVIKTMEAIGEVLQELRFDAESAE.

The protein is Required for excision 1-B domain-containing protein of Mus musculus (Mouse).